A 221-amino-acid chain; its full sequence is Probable septum site-determining protein MinC (221 aa).

The protein belongs to the MinC family. As to quaternary structure, interacts with MinD and FtsZ.

Functionally, cell division inhibitor that blocks the formation of polar Z ring septums. Rapidly oscillates between the poles of the cell to destabilize FtsZ filaments that have formed before they mature into polar Z rings. Prevents FtsZ polymerization. The protein is Probable septum site-determining protein MinC of Shewanella baltica (strain OS223).